The chain runs to 274 residues: Mitochondrial S-adenosylmethionine carrier protein (274 aa).

Solcar repeat units lie at residues 4 to 77, 86 to 168, and 177 to 265; these read PGFV…VKWF, LTPM…LKAL, and VDSW…THSL. Transmembrane regions (helical) follow at residues 5 to 25, 49 to 69, 85 to 105, 142 to 162, 182 to 202, and 238 to 258; these read GFVA…LILF, IYAG…AFFI, YLTP…ACLI, RGYK…FPLW, SAVC…PLDV, and FAGV…FLGA.

Belongs to the mitochondrial carrier (TC 2.A.29) family. In terms of tissue distribution, widely expressed. Highly expressed in testis, with moderate expression in brain, heart, kidney, lung, skeletal muscle, pancreas, small intestine and liver, and low expression in spleen.

The protein resides in the mitochondrion inner membrane. It catalyses the reaction S-adenosyl-L-homocysteine(out) + S-adenosyl-L-methionine(in) = S-adenosyl-L-homocysteine(in) + S-adenosyl-L-methionine(out). With respect to regulation, strongly inhibited by tannic acid and Bromocresol Purple. Mitochondrial S-adenosyl-L-methionine/S-adenosyl-L-homocysteine antiporter. Mediates the exchange of cytosolic S-adenosyl-L-methionine, the predominant methyl-group donor for macromolecule methylation processes, for mitochondrial S-adenosylhomocysteine(SAH), a by-product of methylation reactions. The sequence is that of Mitochondrial S-adenosylmethionine carrier protein from Homo sapiens (Human).